The primary structure comprises 177 residues: MSRVGKLPITIPEGVKVGLNDLEVKISGPKGELSKTFKGNIAISLEENKLLVKPLAANKNARAMWGTARSIISNMVTGVKEGFKLKLEINGVGYRAMVKGKYLNLMLAKSHNTKIEIPSDIKIEVPKQNIIILEGTDKEKLGQFASIIIKQRPPEPYKGKGIKFENQFIPRKEGKKN.

It belongs to the universal ribosomal protein uL6 family. As to quaternary structure, part of the 50S ribosomal subunit.

Its function is as follows. This protein binds to the 23S rRNA, and is important in its secondary structure. It is located near the subunit interface in the base of the L7/L12 stalk, and near the tRNA binding site of the peptidyltransferase center. This Rickettsia felis (strain ATCC VR-1525 / URRWXCal2) (Rickettsia azadi) protein is Large ribosomal subunit protein uL6.